The primary structure comprises 202 residues: Cilia- and flagella-associated protein 418 (202 aa).

Residues 71 to 90 (DVDTPTSTHEPSPAKASSSA) are disordered. Polar residues predominate over residues 74–90 (TPTSTHEPSPAKASSSA).

In terms of tissue distribution, ubiquitously expressed during early development and in adult tissues including the eye, brain, heart and kidney.

It localises to the cytoplasm. The protein resides in the photoreceptor inner segment. Functionally, may be involved in photoreceptor outer segment disk morphogenesis. This Danio rerio (Zebrafish) protein is Cilia- and flagella-associated protein 418 (cfap418).